We begin with the raw amino-acid sequence, 465 residues long: ATP synthase subunit beta (465 aa).

Residue 152 to 159 (GGAGVGKT) participates in ATP binding.

Belongs to the ATPase alpha/beta chains family. In terms of assembly, F-type ATPases have 2 components, CF(1) - the catalytic core - and CF(0) - the membrane proton channel. CF(1) has five subunits: alpha(3), beta(3), gamma(1), delta(1), epsilon(1). CF(0) has three main subunits: a(1), b(2) and c(9-12). The alpha and beta chains form an alternating ring which encloses part of the gamma chain. CF(1) is attached to CF(0) by a central stalk formed by the gamma and epsilon chains, while a peripheral stalk is formed by the delta and b chains.

It localises to the cell inner membrane. The catalysed reaction is ATP + H2O + 4 H(+)(in) = ADP + phosphate + 5 H(+)(out). Produces ATP from ADP in the presence of a proton gradient across the membrane. The catalytic sites are hosted primarily by the beta subunits. The protein is ATP synthase subunit beta of Campylobacter curvus (strain 525.92).